A 344-amino-acid chain; its full sequence is Follistatin (344 aa).

An N-terminal signal peptide occupies residues 1 to 29 (MVCARHQPGGLCLLLLLLCQFMEDRSAQA). Residues 30-103 (GNCWLRQAKN…TCENVDCGPG (74 aa)) form the TB domain. 18 disulfides stabilise this stretch: cysteine 32–cysteine 55, cysteine 42–cysteine 88, cysteine 56–cysteine 91, cysteine 95–cysteine 106, cysteine 100–cysteine 116, cysteine 118–cysteine 150, cysteine 122–cysteine 143, cysteine 132–cysteine 164, cysteine 168–cysteine 179, cysteine 173–cysteine 189, cysteine 192–cysteine 225, cysteine 196–cysteine 218, cysteine 207–cysteine 239, cysteine 245–cysteine 256, cysteine 250–cysteine 267, cysteine 270–cysteine 302, cysteine 274–cysteine 295, and cysteine 284–cysteine 316. The Follistatin-like 1 domain occupies 94 to 117 (TCENVDCGPGKKCRMNKKNKPRCV). Positions 112–166 (NKPRCVCAPDCSNITWKGPVCGLDGKTYRNECALLKARCKEQPELEVQYQGKCKK) constitute a Kazal-like 1 domain. Asparagine 124 is a glycosylation site (N-linked (GlcNAc...) asparagine). The 24-residue stretch at 167 to 190 (TCRDVFCPGSSTCVVDQTNNAYCV) folds into the Follistatin-like 2 domain. Residues 186–241 (NAYCVTCNRICPEPSSSEQYLCGNDGVTYSSACHLRKATCLLGRSIGLAYEGKCIK) enclose the Kazal-like 2 domain. Residues 244–268 (SCEDIQCGGGKKCLWDSKVGRGRCS) form the Follistatin-like 3 domain. Residues 264 to 318 (RGRCSLCDELCPDSKSDEPVCASDNATYASECAMKEAACSSGVLLEVKHSGSCNS) form the Kazal-like 3 domain. An N-linked (GlcNAc...) asparagine glycan is attached at asparagine 288. Positions 315–344 (SCNSISEETEEEEEEEDQDYSFPISSILEW) are disordered. Residues 321–333 (EETEEEEEEEDQD) are compositionally biased toward acidic residues.

As to quaternary structure, interacts with GDF11. Interacts with activin A/INHBA. Interacts with myostatin/MSTN.

The protein resides in the secreted. The protein localises to the nucleus. Its subcellular location is the nucleolus. Multifunctional regulatory protein whose primary function is to antagonize members of the transforming growth factor beta (TGF-beta) superfamily including activin, myostatin, GDF11 or bone morphogenetic proteins (BMPs). Mechanistically, binds to these ligands in the extracellular space, blocking their type II receptor-binding site to inhibit downstream signaling. Plays an essential role in muscle fiber formation and growth both by preventing the repressive effects of myostatin and through SMAD3/AKT/mTOR signaling independently of myostatin. Also promotes neural differentiation by antagonizing the action BMP4. Acts as a specific inhibitor of the biosynthesis and secretion of pituitary follicle stimulating hormone (FSH) by sequestering activin A/INHBA. On the other hand, translocates into the nucleus where it down-regulates rRNA synthesis and ribosome biogenesis to maintain cellular energy homeostasis by binding to rDNA. The sequence is that of Follistatin from Mus musculus (Mouse).